Consider the following 166-residue polypeptide: uncharacterized protein (166 aa).

To B.subtilis YpjQ.

This is an uncharacterized protein from Bacillus subtilis (strain 168).